Here is a 337-residue protein sequence, read N- to C-terminus: Nucleoid-associated protein Avin_11450 (337 aa).

Belongs to the YejK family.

It localises to the cytoplasm. The protein localises to the nucleoid. This chain is Nucleoid-associated protein Avin_11450, found in Azotobacter vinelandii (strain DJ / ATCC BAA-1303).